The chain runs to 912 residues: Protein translocase subunit SecA (912 aa).

Residues glutamine 86, 104–108, and aspartate 494 contribute to the ATP site; that span reads GEGKT. The disordered stretch occupies residues 860–912; it reads EAPEKPAQLQYTAPGEDGASQTRVEGRSSGRSGNPAKAAQDGARKPAPKKKKR.

This sequence belongs to the SecA family. In terms of assembly, monomer and homodimer. Part of the essential Sec protein translocation apparatus which comprises SecA, SecYEG and auxiliary proteins SecDF. Other proteins may also be involved.

It localises to the cell membrane. The protein localises to the cytoplasm. The catalysed reaction is ATP + H2O + cellular proteinSide 1 = ADP + phosphate + cellular proteinSide 2.. Part of the Sec protein translocase complex. Interacts with the SecYEG preprotein conducting channel. Has a central role in coupling the hydrolysis of ATP to the transfer of proteins into and across the cell membrane, serving as an ATP-driven molecular motor driving the stepwise translocation of polypeptide chains across the membrane. The chain is Protein translocase subunit SecA from Arthrobacter sp. (strain FB24).